The chain runs to 691 residues: Threonine--tRNA ligase (691 aa).

A disordered region spans residues 1–22 (MSVPAQPAPGADGGDPRQPIRV). Residues 1-73 (MSVPAQPAPG…DADAEVTPIA (73 aa)) enclose the TGS domain. The catalytic stretch occupies residues 268–574 (DHRKLGVELD…LTEHYAGAFP (307 aa)). The Zn(2+) site is built by Cys373, His424, and His551.

Belongs to the class-II aminoacyl-tRNA synthetase family. Homodimer. Requires Zn(2+) as cofactor.

The protein localises to the cytoplasm. The enzyme catalyses tRNA(Thr) + L-threonine + ATP = L-threonyl-tRNA(Thr) + AMP + diphosphate + H(+). Its function is as follows. Catalyzes the attachment of threonine to tRNA(Thr) in a two-step reaction: L-threonine is first activated by ATP to form Thr-AMP and then transferred to the acceptor end of tRNA(Thr). Also edits incorrectly charged L-seryl-tRNA(Thr). This is Threonine--tRNA ligase from Mycobacterium ulcerans (strain Agy99).